We begin with the raw amino-acid sequence, 145 residues long: Oocyte zinc finger protein XlCOF8.4I (145 aa).

The segment at 1–25 (HKREADFCSKGNLTNPEISPVEHYP) is disordered. Residues 123-145 (LSCSECGKCFSTYHVLARHQKTH) form a C2H2-type zinc finger.

This sequence belongs to the krueppel C2H2-type zinc-finger protein family.

Its subcellular location is the nucleus. Its function is as follows. May be involved in transcriptional regulation. This is Oocyte zinc finger protein XlCOF8.4I from Xenopus laevis (African clawed frog).